An 89-amino-acid polypeptide reads, in one-letter code: UPF0367 protein P9515_01381 (89 aa).

The protein belongs to the UPF0367 family.

The chain is UPF0367 protein P9515_01381 from Prochlorococcus marinus (strain MIT 9515).